Consider the following 520-residue polypeptide: RNA polymerase sigma factor sigA (520 aa).

A chloroplast-targeting transit peptide spans 1–66 (MTATPAVIGL…APATPKLTAV (66 aa)). Residues 37 to 49 (GGGGGGGGGGGGD) are compositionally biased toward gly residues. 3 disordered regions span residues 37–57 (GGGGGGGGGGGGDAMSFAPPA), 87–117 (HHSSAAAALAPPPPPPPPPTPSPASRAAHAH), and 171–190 (SVSARQRRMSGRRRGRTKNG). Positions 96 to 108 (APPPPPPPPPTPS) are enriched in pro residues. Residues 175–187 (RQRRMSGRRRGRT) show a composition bias toward basic residues. Residues 305-318 (DLIQGGLIGLLRGI) carry the Polymerase core binding motif. The segment at residues 479–498 (WEDISRQFGLSRERVRQVGL) is a DNA-binding region (H-T-H motif).

The protein belongs to the sigma-70 factor family. As to expression, expressed in shoots. Expressed in the tips of fully elongated leaves. Expressed in leaf blades.

The protein localises to the plastid. Its subcellular location is the chloroplast. Its function is as follows. Sigma factors are initiation factors that promote the attachment of plastid-encoded RNA polymerase (PEP) to specific initiation sites and are then released. Controls the transcription of the psaA and psaB genes in chloroplast, and thus maintains the abundance of the core protein complex PsaA-PsaB of photosystem I (PSI) in the thylakoid membrane. Maintains PSI activity, sufficient rate of electron transfer from PSII to PSI, and photochemical efficiency. The polypeptide is RNA polymerase sigma factor sigA (Oryza sativa subsp. japonica (Rice)).